Reading from the N-terminus, the 375-residue chain is Succinyl-diaminopimelate desuccinylase (375 aa).

Residue histidine 66 participates in Zn(2+) binding. Aspartate 68 is a catalytic residue. Residue aspartate 99 participates in Zn(2+) binding. The active-site Proton acceptor is the glutamate 133. Glutamate 134, glutamate 162, and histidine 348 together coordinate Zn(2+).

Belongs to the peptidase M20A family. DapE subfamily. Homodimer. Zn(2+) is required as a cofactor. Co(2+) serves as cofactor.

The enzyme catalyses N-succinyl-(2S,6S)-2,6-diaminopimelate + H2O = (2S,6S)-2,6-diaminopimelate + succinate. It functions in the pathway amino-acid biosynthesis; L-lysine biosynthesis via DAP pathway; LL-2,6-diaminopimelate from (S)-tetrahydrodipicolinate (succinylase route): step 3/3. Catalyzes the hydrolysis of N-succinyl-L,L-diaminopimelic acid (SDAP), forming succinate and LL-2,6-diaminopimelate (DAP), an intermediate involved in the bacterial biosynthesis of lysine and meso-diaminopimelic acid, an essential component of bacterial cell walls. The sequence is that of Succinyl-diaminopimelate desuccinylase from Stenotrophomonas maltophilia (strain R551-3).